The primary structure comprises 292 residues: Sulfofructosephosphate aldolase (292 aa).

The active-site Schiff-base intermediate with substrate is the Lys193.

Belongs to the aldolase LacD family. As to quaternary structure, homotetramer.

It catalyses the reaction 6-deoxy-6-sulfo-D-fructose 1-phosphate = (2S)-3-sulfolactaldehyde + dihydroxyacetone phosphate. Its function is as follows. Cleaves 6-deoxy-6-sulfo-D-fructose 1-phosphate (SFP) to form dihydroxyacetone phosphate (DHAP) and 3-sulfolactaldehyde (SLA). This chain is Sulfofructosephosphate aldolase (yihT), found in Escherichia coli (strain K12).